A 128-amino-acid chain; its full sequence is uncharacterized protein (128 aa).

3 consecutive transmembrane segments (helical) span residues 19-41 (MAIV…YVGS), 54-71 (LTFL…SIMQ), and 75-97 (PLIA…VDNL).

The protein localises to the cell membrane. This is an uncharacterized protein from Pasteurella multocida (strain Pm70).